A 531-amino-acid chain; its full sequence is Phosphomethylpyrimidine synthase (531 aa).

Residues Asn-167, Met-196, Tyr-225, His-261, 281–283, 322–325, and Glu-361 contribute to the substrate site; these read SRG and DALR. His-365 contacts Zn(2+). Tyr-388 serves as a coordination point for substrate. His-429 is a binding site for Zn(2+). [4Fe-4S] cluster is bound by residues Cys-511, Cys-514, and Cys-519.

The protein belongs to the ThiC family. Requires [4Fe-4S] cluster as cofactor.

The catalysed reaction is 5-amino-1-(5-phospho-beta-D-ribosyl)imidazole + S-adenosyl-L-methionine = 4-amino-2-methyl-5-(phosphooxymethyl)pyrimidine + CO + 5'-deoxyadenosine + formate + L-methionine + 3 H(+). Its pathway is cofactor biosynthesis; thiamine diphosphate biosynthesis. Catalyzes the synthesis of the hydroxymethylpyrimidine phosphate (HMP-P) moiety of thiamine from aminoimidazole ribotide (AIR) in a radical S-adenosyl-L-methionine (SAM)-dependent reaction. In Chlorobium chlorochromatii (strain CaD3), this protein is Phosphomethylpyrimidine synthase.